Here is a 331-residue protein sequence, read N- to C-terminus: FMRFamide-related neuropeptides (331 aa).

A signal peptide spans 1 to 25 (MRCWSPCSLLVVIVIYCLSSHTSEA). A propeptide spanning residues 26-65 (FDLAQACVESQRLSLLPICDTIFAVQQEGVQQSADDGMRS) is cleaved from the precursor. Phenylalanine amide is present on residues phenylalanine 71 and phenylalanine 83. The propeptide occupies 86-94 (NVPDLPFED). Phenylalanine 100 is modified (phenylalanine amide). Positions 103–168 (AAPQLDELLK…YIDDVEDSDV (66 aa)) are excised as a propeptide. Positions 122-158 (QKADETSVRRKRSTDAAPQNNAENPEQKNDSAKITKR) are disordered. The segment covering 146 to 158 (PEQKNDSAKITKR) has biased composition (basic and acidic residues). Phenylalanine 174 and phenylalanine 181 each carry phenylalanine amide. A propeptide spanning residues 184-194 (NPSDVGNKLTE) is cleaved from the precursor. Phenylalanine 200 is modified (phenylalanine amide). The propeptide occupies 203–205 (DPE). Position 211 is a phenylalanine amide (phenylalanine 211). Residues 214–216 (SDD) constitute a propeptide that is removed on maturation. Position 222 is a phenylalanine amide (phenylalanine 222). A propeptide spanning residues 225–236 (NPSDAEDELEED) is cleaved from the precursor. Phenylalanine 242 is modified (phenylalanine amide). Positions 245 to 254 (GGEDDEEEAE) are excised as a propeptide. Position 260 is a phenylalanine amide (phenylalanine 260). A propeptide spanning residues 263–265 (DPE) is cleaved from the precursor. Phenylalanine 271 bears the Phenylalanine amide mark. A propeptide spanning residues 274–277 (SGED) is cleaved from the precursor. Residues 279-296 (RFMRFGRNPDEQEADKRF) show a composition bias toward basic and acidic residues. The interval 279-310 (RFMRFGRNPDEQEADKRFMRFGRGGEDDEVST) is disordered. Phenylalanine 283 is modified (phenylalanine amide). A propeptide spanning residues 286–293 (NPDEQEAD) is cleaved from the precursor. Phenylalanine 299 carries the phenylalanine amide modification. A propeptide spanning residues 302 to 312 (GGEDDEVSTED) is cleaved from the precursor. Position 318 is a phenylalanine amide (phenylalanine 318). Positions 321 to 331 (SADKCKGCLEG) are excised as a propeptide.

The protein belongs to the FARP (FMRFamide related peptide) family.

Its subcellular location is the secreted. In terms of biological role, excitatory neurotransmitters that directly modulate chromatophore function by activating chromatophore expansion at the chromatophore neuromuscular junction. The protein is FMRFamide-related neuropeptides of Doryteuthis opalescens (California market squid).